Reading from the N-terminus, the 190-residue chain is Potassium-transporting ATPase KdpC subunit (190 aa).

A helical membrane pass occupies residues 7 to 27 (PALLMLLVWTLITGVFYPVLV).

This sequence belongs to the KdpC family. In terms of assembly, the system is composed of three essential subunits: KdpA, KdpB and KdpC.

It is found in the cell inner membrane. Functionally, part of the high-affinity ATP-driven potassium transport (or Kdp) system, which catalyzes the hydrolysis of ATP coupled with the electrogenic transport of potassium into the cytoplasm. This subunit acts as a catalytic chaperone that increases the ATP-binding affinity of the ATP-hydrolyzing subunit KdpB by the formation of a transient KdpB/KdpC/ATP ternary complex. This Methylococcus capsulatus (strain ATCC 33009 / NCIMB 11132 / Bath) protein is Potassium-transporting ATPase KdpC subunit.